The chain runs to 147 residues: uncharacterized protein (147 aa).

Residues 2–63 (LDELDKKIIG…KLNYENIGYD (62 aa)) form the HTH asnC-type domain. The segment at residues 21–40 (YREIAKELNVAVGTIYNRIK) is a DNA-binding region (H-T-H motif).

This is an uncharacterized protein from Pyrococcus abyssi (strain GE5 / Orsay).